The chain runs to 788 residues: LPS-assembly protein LptD (788 aa).

An N-terminal signal peptide occupies residues 1–24 (MKKRFPTLLATLIWTALYSQHTLA).

The protein belongs to the LptD family. In terms of assembly, component of the lipopolysaccharide transport and assembly complex. Interacts with LptE and LptA.

The protein localises to the cell outer membrane. Functionally, together with LptE, is involved in the assembly of lipopolysaccharide (LPS) at the surface of the outer membrane. This Yersinia enterocolitica serotype O:8 / biotype 1B (strain NCTC 13174 / 8081) protein is LPS-assembly protein LptD.